The primary structure comprises 122 residues: Large ribosomal subunit protein uL14 (122 aa).

The protein belongs to the universal ribosomal protein uL14 family. In terms of assembly, part of the 50S ribosomal subunit. Forms a cluster with proteins L3 and L19. In the 70S ribosome, L14 and L19 interact and together make contacts with the 16S rRNA in bridges B5 and B8.

Functionally, binds to 23S rRNA. Forms part of two intersubunit bridges in the 70S ribosome. The polypeptide is Large ribosomal subunit protein uL14 (Pelodictyon phaeoclathratiforme (strain DSM 5477 / BU-1)).